Reading from the N-terminus, the 339-residue chain is Ketol-acid reductoisomerase (NADP(+)) (339 aa).

In terms of domain architecture, KARI N-terminal Rossmann spans 1-182; the sequence is MRVYYDRDAD…GGGRAGIIET (182 aa). NADP(+)-binding positions include 24 to 27, Arg48, Ser51, Thr53, and 83 to 86; these read YGSQ and DELQ. Residue His108 is part of the active site. Position 134 (Gly134) interacts with NADP(+). One can recognise a KARI C-terminal knotted domain in the interval 183–328; that stretch reads TFREECETDL…AKLRAMMPWI (146 aa). Residues Asp191, Glu195, Glu227, and Glu231 each contribute to the Mg(2+) site. Ser252 provides a ligand contact to substrate.

It belongs to the ketol-acid reductoisomerase family. Mg(2+) is required as a cofactor.

It catalyses the reaction (2R)-2,3-dihydroxy-3-methylbutanoate + NADP(+) = (2S)-2-acetolactate + NADPH + H(+). The catalysed reaction is (2R,3R)-2,3-dihydroxy-3-methylpentanoate + NADP(+) = (S)-2-ethyl-2-hydroxy-3-oxobutanoate + NADPH + H(+). The protein operates within amino-acid biosynthesis; L-isoleucine biosynthesis; L-isoleucine from 2-oxobutanoate: step 2/4. Its pathway is amino-acid biosynthesis; L-valine biosynthesis; L-valine from pyruvate: step 2/4. Its function is as follows. Involved in the biosynthesis of branched-chain amino acids (BCAA). Catalyzes an alkyl-migration followed by a ketol-acid reduction of (S)-2-acetolactate (S2AL) to yield (R)-2,3-dihydroxy-isovalerate. In the isomerase reaction, S2AL is rearranged via a Mg-dependent methyl migration to produce 3-hydroxy-3-methyl-2-ketobutyrate (HMKB). In the reductase reaction, this 2-ketoacid undergoes a metal-dependent reduction by NADPH to yield (R)-2,3-dihydroxy-isovalerate. In Methylocella silvestris (strain DSM 15510 / CIP 108128 / LMG 27833 / NCIMB 13906 / BL2), this protein is Ketol-acid reductoisomerase (NADP(+)).